Here is a 571-residue protein sequence, read N- to C-terminus: MKQSKLLMPTLREVPADAEVKSHQLLLKAGFIRPVSAGTFSYLPMAKRVLNKIEQIIREEMDRIDANEMLVPEILPAELWQKSGRYTTYGPNLYKFKNRQDRDFILGPTHEETFTQLMADDIKSYKKLPLVVYQIQPKFRDENRPRFGLLRTREFIMKDAYSFSADQAGLDTAFRNMESAYTNVFDRIGLNYRAIVGDAGAMGGSDSKEFSAPAAAGEDIIAYSDTTDYAANLEMAKDFYERQKPTFSAEPLEKIDTPNEKTIEELSQLLDVPAEKLAKTIMFMADGELVAVVTTGDFEVNDVKVQNFLQADTLELAEEGQVKALIGASFGSLGPVKLPENVRLLVDERAADLVNFAAGANEDGKHYLNINWQRDVQLTEENIGDFRTAREGDVAVDGHGHLVFTKGIEIGHIFKLGTRYSKAMGAQVLDENGRQVDMIMGSYGIGVSRLLSAIVEQKADDDGLVWPASVAPFDVHIVPVNTKDDEQAGVASQLEELLTKQGLEVLIDDRKERAGVKFADADLIGLPIRITVGKKASEDVVEVKVRASNTNIEMRVSEVVDSVSVLLNGDK.

Belongs to the class-II aminoacyl-tRNA synthetase family. ProS type 1 subfamily. Homodimer.

Its subcellular location is the cytoplasm. The enzyme catalyses tRNA(Pro) + L-proline + ATP = L-prolyl-tRNA(Pro) + AMP + diphosphate. Catalyzes the attachment of proline to tRNA(Pro) in a two-step reaction: proline is first activated by ATP to form Pro-AMP and then transferred to the acceptor end of tRNA(Pro). As ProRS can inadvertently accommodate and process non-cognate amino acids such as alanine and cysteine, to avoid such errors it has two additional distinct editing activities against alanine. One activity is designated as 'pretransfer' editing and involves the tRNA(Pro)-independent hydrolysis of activated Ala-AMP. The other activity is designated 'posttransfer' editing and involves deacylation of mischarged Ala-tRNA(Pro). The misacylated Cys-tRNA(Pro) is not edited by ProRS. The polypeptide is Proline--tRNA ligase (Leuconostoc citreum (strain KM20)).